A 129-amino-acid chain; its full sequence is Small ribosomal subunit protein uS9 (129 aa).

A disordered region spans residues 110–129; that stretch reads VERKKYGKKKARKSFQFSKR. The segment covering 114–129 has biased composition (basic residues); it reads KYGKKKARKSFQFSKR.

The protein belongs to the universal ribosomal protein uS9 family.

The protein is Small ribosomal subunit protein uS9 of Chlorobaculum parvum (strain DSM 263 / NCIMB 8327) (Chlorobium vibrioforme subsp. thiosulfatophilum).